Here is a 31-residue protein sequence, read N- to C-terminus: Photosystem I reaction center subunit XII (31 aa).

A helical transmembrane segment spans residues 7-26; it reads QVYIALLTALIPAFFALKLG.

Belongs to the PsaM family.

Its subcellular location is the plastid. It localises to the chloroplast thylakoid membrane. The chain is Photosystem I reaction center subunit XII from Euglena viridis (Cercaria viridis).